The chain runs to 294 residues: Tyrosine recombinase XerC (294 aa).

One can recognise a Core-binding (CB) domain in the interval 1-85 (MSRLVEDFFA…ACRGFYTWLV (85 aa)). One can recognise a Tyr recombinase domain in the interval 106-283 (KLPRILDADE…DFQYLSKVYD (178 aa)). Residues Arg145, Lys169, His235, Arg238, and His261 contribute to the active site. The O-(3'-phospho-DNA)-tyrosine intermediate role is filled by Tyr270.

The protein belongs to the 'phage' integrase family. XerC subfamily. In terms of assembly, forms a cyclic heterotetrameric complex composed of two molecules of XerC and two molecules of XerD.

It localises to the cytoplasm. In terms of biological role, site-specific tyrosine recombinase, which acts by catalyzing the cutting and rejoining of the recombining DNA molecules. The XerC-XerD complex is essential to convert dimers of the bacterial chromosome into monomers to permit their segregation at cell division. It also contributes to the segregational stability of plasmids. The protein is Tyrosine recombinase XerC of Xylella fastidiosa (strain M23).